A 61-amino-acid chain; its full sequence is DNA-directed RNA polymerase subunit Rpo6 (61 aa).

It belongs to the archaeal Rpo6/eukaryotic RPB6 RNA polymerase subunit family. As to quaternary structure, part of the RNA polymerase complex.

The protein resides in the cytoplasm. The enzyme catalyses RNA(n) + a ribonucleoside 5'-triphosphate = RNA(n+1) + diphosphate. Its function is as follows. DNA-dependent RNA polymerase (RNAP) catalyzes the transcription of DNA into RNA using the four ribonucleoside triphosphates as substrates. The polypeptide is DNA-directed RNA polymerase subunit Rpo6 (Thermoplasma acidophilum (strain ATCC 25905 / DSM 1728 / JCM 9062 / NBRC 15155 / AMRC-C165)).